The primary structure comprises 409 residues: uncharacterized protein (409 aa).

Zn(2+) is bound at residue His-46. Residue Glu-49 is the Proton acceptor of the active site. His-50 and Glu-126 together coordinate Zn(2+).

Belongs to the peptidase M16 family. Zn(2+) is required as a cofactor.

This is an uncharacterized protein from Bacillus subtilis (strain 168).